The chain runs to 262 residues: 3-methyl-2-oxobutanoate hydroxymethyltransferase (262 aa).

Mg(2+) contacts are provided by Asp-44 and Asp-83. Residues 44 to 45 (DS), Asp-83, and Lys-113 each bind 3-methyl-2-oxobutanoate. Glu-115 serves as a coordination point for Mg(2+). The active-site Proton acceptor is Glu-182.

This sequence belongs to the PanB family. In terms of assembly, homodecamer; pentamer of dimers. Requires Mg(2+) as cofactor.

Its subcellular location is the cytoplasm. The enzyme catalyses 3-methyl-2-oxobutanoate + (6R)-5,10-methylene-5,6,7,8-tetrahydrofolate + H2O = 2-dehydropantoate + (6S)-5,6,7,8-tetrahydrofolate. It functions in the pathway cofactor biosynthesis; (R)-pantothenate biosynthesis; (R)-pantoate from 3-methyl-2-oxobutanoate: step 1/2. Catalyzes the reversible reaction in which hydroxymethyl group from 5,10-methylenetetrahydrofolate is transferred onto alpha-ketoisovalerate to form ketopantoate. This Picosynechococcus sp. (strain ATCC 27264 / PCC 7002 / PR-6) (Agmenellum quadruplicatum) protein is 3-methyl-2-oxobutanoate hydroxymethyltransferase.